The primary structure comprises 209 residues: Ion-translocating oxidoreductase complex subunit G (209 aa).

A helical membrane pass occupies residues 9–29 (ATTLALFAASTTAVTAVVNML). Thr-175 carries the post-translational modification FMN phosphoryl threonine.

It belongs to the RnfG family. As to quaternary structure, the complex is composed of six subunits: RnfA, RnfB, RnfC, RnfD, RnfE and RnfG. Requires FMN as cofactor.

It is found in the cell inner membrane. In terms of biological role, part of a membrane-bound complex that couples electron transfer with translocation of ions across the membrane. The sequence is that of Ion-translocating oxidoreductase complex subunit G from Pectobacterium atrosepticum (strain SCRI 1043 / ATCC BAA-672) (Erwinia carotovora subsp. atroseptica).